A 216-amino-acid chain; its full sequence is Pyrrolidone-carboxylate peptidase (216 aa).

Active-site residues include Glu80, Cys143, and His167.

It belongs to the peptidase C15 family. As to quaternary structure, homotetramer.

The protein resides in the cytoplasm. The enzyme catalyses Release of an N-terminal pyroglutamyl group from a polypeptide, the second amino acid generally not being Pro.. In terms of biological role, removes 5-oxoproline from various penultimate amino acid residues except L-proline. This Streptomyces coelicolor (strain ATCC BAA-471 / A3(2) / M145) protein is Pyrrolidone-carboxylate peptidase (pcp).